We begin with the raw amino-acid sequence, 146 residues long: Hemoglobin subunit beta-1 (146 aa).

Residues 2 to 146 (GLTAHDRQLI…IADALGKGYH (145 aa)) enclose the Globin domain. The heme b site is built by H63 and H92.

It belongs to the globin family. In terms of assembly, heterotetramer of two alpha chains and two beta chains. Red blood cells.

Its function is as follows. Involved in oxygen transport from the lung to the various peripheral tissues. The protein is Hemoglobin subunit beta-1 (hbb1) of Xenopus borealis (Kenyan clawed frog).